A 344-amino-acid polypeptide reads, in one-letter code: Arginine N-succinyltransferase (344 aa).

Leu-125 is a binding site for succinyl-CoA. The active-site Proton donor is the His-229.

Belongs to the arginine N-succinyltransferase family.

The enzyme catalyses succinyl-CoA + L-arginine = N(2)-succinyl-L-arginine + CoA + H(+). The protein operates within amino-acid degradation; L-arginine degradation via AST pathway; L-glutamate and succinate from L-arginine: step 1/5. Catalyzes the transfer of succinyl-CoA to arginine to produce N(2)-succinylarginine. The chain is Arginine N-succinyltransferase from Enterobacter sp. (strain 638).